We begin with the raw amino-acid sequence, 540 residues long: Probable H/ACA ribonucleoprotein complex subunit 4 (540 aa).

A disordered region spans residues 1-24 (MTTDKKSKSKSSEKSTQEVEQVIK). The active-site Nucleophile is the aspartate 109. The 76-residue stretch at 280–355 (YKRIVVKDSA…VVATIKRVIM (76 aa)) folds into the PUA domain. Residues 414-540 (SPVESMNVDT…DKKEKKKSKN (127 aa)) form a disordered region. Residues 448–494 (KKEKKDKKEKKKDSSDDESEEEKSSKKDKKEKKEKKEKKEKKSSKDD) adopt a coiled-coil conformation. A compositionally biased stretch (basic residues) spans 473 to 489 (KKDKKEKKEKKEKKEKK). Basic and acidic residues-rich tracts occupy residues 490-503 (SSKDDSDDESSKKE) and 513-528 (SDKDSDSEKESSDKKD). Residues 529–540 (KKDKKEKKKSKN) are compositionally biased toward basic residues.

It belongs to the pseudouridine synthase TruB family. In terms of assembly, component of the small nucleolar ribonucleoprotein particles containing H/ACA-type snoRNAs (H/ACA snoRNPs).

It localises to the nucleus. The protein localises to the nucleolus. The catalysed reaction is a uridine in RNA = a pseudouridine in RNA. Plays a central role in ribosomal RNA processing. Probable catalytic subunit of H/ACA small nucleolar ribonucleoprotein (H/ACA snoRNP) complex, which catalyzes pseudouridylation of rRNA. This involves the isomerization of uridine such that the ribose is subsequently attached to C5, instead of the normal N1. Pseudouridine ('psi') residues may serve to stabilize the conformation of rRNAs. This Dictyostelium discoideum (Social amoeba) protein is Probable H/ACA ribonucleoprotein complex subunit 4 (nola4).